A 500-amino-acid polypeptide reads, in one-letter code: Lysine--tRNA ligase (500 aa).

Positions 407 and 414 each coordinate Mg(2+).

The protein belongs to the class-II aminoacyl-tRNA synthetase family. In terms of assembly, homodimer. Requires Mg(2+) as cofactor.

It localises to the cytoplasm. The catalysed reaction is tRNA(Lys) + L-lysine + ATP = L-lysyl-tRNA(Lys) + AMP + diphosphate. This Azobacteroides pseudotrichonymphae genomovar. CFP2 protein is Lysine--tRNA ligase.